Here is a 1000-residue protein sequence, read N- to C-terminus: Vacuolar sorting protein 39 (1000 aa).

A CNH domain is found at 16 to 282 (PARIDAVESY…RRLVKSNNAV (267 aa)). A disordered region spans residues 394-413 (DEASLSRGSSGISDDMESSS). One copy of the CHCR repeat lies at 607-796 (YSMLVLESCP…YLNPKKSAKD (190 aa)). The segment at 844-864 (GLSSSTDSGRSDVDTEEPLEE) is disordered.

It belongs to the VAM6/VPS39 family. As to quaternary structure, homooligomer. Component of the homotypic fusion and vacuole protein sorting (HOPS) complex composed of the class C Vps core proteins VPS11, VCL1, VPS18 and VPS33, which in HOPS further associates with VPS39 and VPS41. Interacts directly with VPS11. Binds to RABG3B.

The protein localises to the cytoplasm. The protein resides in the vacuole membrane. Its function is as follows. Essential protein required during embryogenesis. Believed to act in part as a component of the putative HOPS endosomal tethering complex. HOPS is required for the central vacuole formation. May play a role in clustering and fusion of late endosomes and lysosomes. Plays a role in vesicle-mediated protein trafficking to lysosomal compartments including the endocytic membrane transport and autophagic pathways. Required for fusion of endosomes and autophagosomes with lysosomes. This Arabidopsis thaliana (Mouse-ear cress) protein is Vacuolar sorting protein 39.